Consider the following 235-residue polypeptide: Orotidine 5'-phosphate decarboxylase (235 aa).

Substrate-binding positions include aspartate 10, lysine 32, 59 to 68 (DLKLHDIPNT), threonine 123, arginine 184, glutamine 193, glycine 213, and arginine 214. Lysine 61 acts as the Proton donor in catalysis.

It belongs to the OMP decarboxylase family. Type 1 subfamily. Homodimer.

The catalysed reaction is orotidine 5'-phosphate + H(+) = UMP + CO2. It participates in pyrimidine metabolism; UMP biosynthesis via de novo pathway; UMP from orotate: step 2/2. Its function is as follows. Catalyzes the decarboxylation of orotidine 5'-monophosphate (OMP) to uridine 5'-monophosphate (UMP). The protein is Orotidine 5'-phosphate decarboxylase of Paramagnetospirillum magneticum (strain ATCC 700264 / AMB-1) (Magnetospirillum magneticum).